Here is a 320-residue protein sequence, read N- to C-terminus: Phospho-N-acetylmuramoyl-pentapeptide-transferase (320 aa).

10 consecutive transmembrane segments (helical) span residues 7 to 27 (ILAI…VIPF), 50 to 70 (GTPT…SLIF), 77 to 97 (IGAP…DDFI), 113 to 133 (LVLQ…HLGS), 148 to 168 (WAYV…VNLT), 173 to 193 (GLAS…SIFS), 198 to 216 (MAIF…LRYN), 221 to 241 (VVFM…AIAV), 247 to 267 (VLVL…MLQV), and 297 to 317 (VVVV…AMIQ).

It belongs to the glycosyltransferase 4 family. MraY subfamily. It depends on Mg(2+) as a cofactor.

Its subcellular location is the cell membrane. It carries out the reaction UDP-N-acetyl-alpha-D-muramoyl-L-alanyl-gamma-D-glutamyl-meso-2,6-diaminopimeloyl-D-alanyl-D-alanine + di-trans,octa-cis-undecaprenyl phosphate = di-trans,octa-cis-undecaprenyl diphospho-N-acetyl-alpha-D-muramoyl-L-alanyl-D-glutamyl-meso-2,6-diaminopimeloyl-D-alanyl-D-alanine + UMP. The protein operates within cell wall biogenesis; peptidoglycan biosynthesis. Functionally, catalyzes the initial step of the lipid cycle reactions in the biosynthesis of the cell wall peptidoglycan: transfers peptidoglycan precursor phospho-MurNAc-pentapeptide from UDP-MurNAc-pentapeptide onto the lipid carrier undecaprenyl phosphate, yielding undecaprenyl-pyrophosphoryl-MurNAc-pentapeptide, known as lipid I. This chain is Phospho-N-acetylmuramoyl-pentapeptide-transferase, found in Caldicellulosiruptor bescii (strain ATCC BAA-1888 / DSM 6725 / KCTC 15123 / Z-1320) (Anaerocellum thermophilum).